The sequence spans 2214 residues: Genome polyprotein (2214 aa).

Disordered regions lie at residues 1-21 and 600-619; these read MGAQ…VATG and KPQK…VNSQ. Residue Gly-2 is the site of N-myristoyl glycine; by host attachment. Topologically, residues 2–1525 are cytoplasmic; it reads GAQVSSQKVG…NLNRAMTILQ (1524 aa). 2 amphipathic alpha-helix regions span residues 580-601 and 581-601; these read QGIE…QPKP and GIEE…QPKP. Positions 606-619 are enriched in polar residues; it reads TAQSTPSTSGVNSQ. Active-site for protease 2A activity residues include His-906 and Asp-924. Zn(2+) is bound by residues Cys-941 and Cys-943. Cys-995 serves as the catalytic For protease 2A activity. Zn(2+) contacts are provided by Cys-1001 and His-1003. The membrane-binding stretch occupies residues 1133–1205; sequence GDSWLKKFTE…HQSCPSQEQQ (73 aa). The tract at residues 1133-1271 is oligomerization; the sequence is GDSWLKKFTE…SPGTGKSIAT (139 aa). The segment at 1154–1158 is RNA-binding; the sequence is SNKIS. Positions 1237 to 1393 constitute an SF3 helicase domain; sequence ENTINNYIQF…SEHSIKGKLN (157 aa). Residue 1261–1268 coordinates ATP; it reads GSPGTGKS. Zn(2+) contacts are provided by Cys-1401, Cys-1404, Cys-1413, and Cys-1418. The segment at 1401 to 1418 adopts a C4-type zinc-finger fold; sequence CKDCPQPANFKKCCPLVC. An RNA-binding region spans residues 1445 to 1452; sequence ERNRRANI. An oligomerization region spans residues 1456 to 1461; that stretch reads MEALFQ. Residues 1526 to 1541 lie within the membrane without spanning it; that stretch reads AVTTFAAVAAVVYVMY. At 1542 to 2214 the chain is on the cytoplasmic side; it reads KLFAGHQGAY…TLYRRWLDSF (673 aa). Tyr-1551 carries the O-(5'-phospho-RNA)-tyrosine modification. A Peptidase C3 domain is found at 1571-1749; that stretch reads GPGFDYAVAM…FAAALKRSYF (179 aa). Active-site for protease 3C activity residues include His-1610, Glu-1641, and Cys-1717. In terms of domain architecture, RdRp catalytic spans 1980–2095; that stretch reads EKLFAFDYTG…SYPHEVDASL (116 aa). The Mg(2+) site is built by Asp-1986 and Asp-2081.

It belongs to the picornaviruses polyprotein family. As to quaternary structure, interacts with capsid protein VP1 and capsid protein VP3 to form heterotrimeric protomers. Interacts with capsid protein VP0, and capsid protein VP3 to form heterotrimeric protomers. Five protomers subsequently associate to form pentamers which serve as building blocks for the capsid. Interacts with capsid protein VP2, capsid protein VP3 and capsid protein VP4 following cleavage of capsid protein VP0. In terms of assembly, interacts with capsid protein VP1 and capsid protein VP3 in the mature capsid. As to quaternary structure, interacts with capsid protein VP0 and capsid protein VP1 to form heterotrimeric protomers. Five protomers subsequently associate to form pentamers which serve as building blocks for the capsid. Interacts with capsid protein VP4 in the mature capsid. Interacts with protein 2C; this interaction may be important for virion morphogenesis. Interacts with capsid protein VP1 and capsid protein VP3. In terms of assembly, homodimer. As to quaternary structure, homohexamer; forms a hexameric ring structure with 6-fold symmetry characteristic of AAA+ ATPases. Interacts (via N-terminus) with host RTN3 (via reticulon domain); this interaction is important for viral replication. Interacts with capsid protein VP3; this interaction may be important for virion morphogenesis. Interacts with protein 3CD. In terms of assembly, homodimer. Interacts with host GBF1. Interacts (via GOLD domain) with host ACBD3 (via GOLD domain); this interaction allows the formation of a viral protein 3A/ACBD3 heterotetramer with a 2:2 stoichiometry, which will stimulate the recruitment of host PI4KB in order to synthesize PI4P at the viral RNA replication sites. As to quaternary structure, interacts with RNA-directed RNA polymerase. Interacts with protein 3AB and with RNA-directed RNA polymerase. In terms of assembly, interacts with Viral protein genome-linked and with protein 3CD. Mg(2+) is required as a cofactor. Post-translationally, specific enzymatic cleavages in vivo by the viral proteases yield processing intermediates and the mature proteins. Myristoylation is required for the formation of pentamers during virus assembly. Further assembly of 12 pentamers and a molecule of genomic RNA generates the provirion. In terms of processing, during virion maturation, immature virions are rendered infectious following cleavage of VP0 into VP4 and VP2. This maturation seems to be an autocatalytic event triggered by the presence of RNA in the capsid and it is followed by a conformational change infectious virion. Post-translationally, myristoylation is required during RNA encapsidation and formation of the mature virus particle. VPg is uridylylated by the polymerase into VPg-pUpU. This acts as a nucleotide-peptide primer for the genomic RNA replication.

The protein resides in the virion. The protein localises to the host cytoplasm. It localises to the host cytoplasmic vesicle membrane. It is found in the host nucleus. The catalysed reaction is a ribonucleoside 5'-triphosphate + H2O = a ribonucleoside 5'-diphosphate + phosphate + H(+). The enzyme catalyses Selective cleavage of Tyr-|-Gly bond in the picornavirus polyprotein.. It carries out the reaction RNA(n) + a ribonucleoside 5'-triphosphate = RNA(n+1) + diphosphate. It catalyses the reaction Selective cleavage of Gln-|-Gly bond in the poliovirus polyprotein. In other picornavirus reactions Glu may be substituted for Gln, and Ser or Thr for Gly.. Its activity is regulated as follows. Replication or transcription is subject to high level of random mutations by the nucleotide analog ribavirin. Functionally, forms an icosahedral capsid of pseudo T=3 symmetry with capsid proteins VP2 and VP3. The capsid is 300 Angstroms in diameter, composed of 60 copies of each capsid protein and enclosing the viral positive strand RNA genome. Capsid protein VP1 mainly forms the vertices of the capsid. Capsid protein VP1 interacts with host cell receptor to provide virion attachment to target host cells. This attachment induces virion internalization. Tyrosine kinases are probably involved in the entry process. After binding to its receptor, the capsid undergoes conformational changes. Capsid protein VP1 N-terminus (that contains an amphipathic alpha-helix) and capsid protein VP4 are externalized. Together, they shape a pore in the host membrane through which viral genome is translocated to host cell cytoplasm. Its function is as follows. Forms an icosahedral capsid of pseudo T=3 symmetry with capsid proteins VP2 and VP3. The capsid is 300 Angstroms in diameter, composed of 60 copies of each capsid protein and enclosing the viral positive strand RNA genome. In terms of biological role, lies on the inner surface of the capsid shell. After binding to the host receptor, the capsid undergoes conformational changes. Capsid protein VP4 is released, Capsid protein VP1 N-terminus is externalized, and together, they shape a pore in the host membrane through which the viral genome is translocated into the host cell cytoplasm. Component of immature procapsids, which is cleaved into capsid proteins VP4 and VP2 after maturation. Allows the capsid to remain inactive before the maturation step. Functionally, cysteine protease that cleaves viral polyprotein and specific host proteins. It is responsible for the autocatalytic cleavage between the P1 and P2 regions, which is the first cleavage occurring in the polyprotein. Also cleaves the host translation initiation factor EIF4G1, in order to shut down the capped cellular mRNA translation. Inhibits the host nucleus-cytoplasm protein and RNA trafficking by cleaving host members of the nuclear pores. Counteracts stress granule formation probably by antagonizing its assembly or promoting its dissassembly. Cleaves and inhibits host IFIH1/MDA5, thereby inhibiting the type-I IFN production and the establishment of the antiviral state. Cleaves and inhibits host MAVS, thereby inhibiting the type-I IFN production and the establishment of the antiviral state. Its function is as follows. Plays an essential role in the virus replication cycle by acting as a viroporin. Creates a pore in the host endoplasmic reticulum and as a consequence releases Ca2+ in the cytoplasm of infected cell. In turn, high levels of cytoplasmic calcium may trigger membrane trafficking and transport of viral ER-associated proteins to viroplasms, sites of viral genome replication. In terms of biological role, induces and associates with structural rearrangements of intracellular membranes. Displays RNA-binding, nucleotide binding and NTPase activities. May play a role in virion morphogenesis and viral RNA encapsidation by interacting with the capsid protein VP3. Localizes the viral replication complex to the surface of membranous vesicles. Together with protein 3CD binds the Cis-Active RNA Element (CRE) which is involved in RNA synthesis initiation. Acts as a cofactor to stimulate the activity of 3D polymerase, maybe through a nucleid acid chaperone activity. Functionally, localizes the viral replication complex to the surface of membranous vesicles. It inhibits host cell endoplasmic reticulum-to-Golgi apparatus transport and causes the disassembly of the Golgi complex, possibly through GBF1 interaction. This would result in depletion of MHC, trail receptors and IFN receptors at the host cell surface. Plays an essential role in viral RNA replication by recruiting ACBD3 and PI4KB at the viral replication sites, thereby allowing the formation of the rearranged membranous structures where viral replication takes place. Its function is as follows. Acts as a primer for viral RNA replication and remains covalently bound to viral genomic RNA. VPg is uridylylated prior to priming replication into VPg-pUpU. The oriI viral genomic sequence may act as a template for this. The VPg-pUpU is then used as primer on the genomic RNA poly(A) by the RNA-dependent RNA polymerase to replicate the viral genome. During genome replication, the VPg-RNA linkage is removed by the host TDP2, thereby accelerating replication. During the late stage of the replication cycle, host TDP2 is excluded from sites of viral RNA synthesis and encapsidation, allowing for the generation of progeny virions. In terms of biological role, involved in the viral replication complex and viral polypeptide maturation. It exhibits protease activity with a specificity and catalytic efficiency that is different from protease 3C. Protein 3CD lacks polymerase activity. Protein 3CD binds to the 5'UTR of the viral genome. Replicates the viral genomic RNA on the surface of intracellular membranes. May form linear arrays of subunits that propagate along a strong head-to-tail interaction called interface-I. Covalently attaches UMP to a tyrosine of VPg, which is used to prime RNA synthesis. The positive stranded RNA genome is first replicated at virus induced membranous vesicles, creating a dsRNA genomic replication form. This dsRNA is then used as template to synthesize positive stranded RNA genomes. ss(+)RNA genomes are either translated, replicated or encapsidated. Functionally, major viral protease that mediates proteolytic processing of the polyprotein. Cleaves host EIF5B, contributing to host translation shutoff. Also cleaves host PABPC1, contributing to host translation shutoff. Cleaves host NLRP1, triggers host N-glycine-mediated degradation of the autoinhibitory NLRP1 N-terminal fragment. The sequence is that of Genome polyprotein from Coxsackievirus A24 (strain EH24/70).